The sequence spans 936 residues: Intimin (936 aa).

A signal peptide spans 1–41 (MIIHGFCTGTRHKHKLRKTFIMLGAGLGLFFSVNQNSFANG). Positions 63–112 (LFYTLKTGESVAQLSKSQGISVPVIWSLNKHLYSSESEMMKASPGQQIIL) constitute a LysM domain. Big-1 domains are found at residues 557 to 650 (ITNF…VIFV) and 657 to 748 (ITEI…VEFF). Residues 780 to 831 (KLQATGGNGKYTWKSSNTKIASVDNSGVITLNEKGSATITVVSGDNQSATYT) form the BIG2 domain. A disulfide bridge links cysteine 857 with cysteine 934.

It belongs to the intimin/invasin family.

It is found in the cell outer membrane. In terms of biological role, an inverse autotransporter. The protein is Intimin (eae) of Citrobacter freundii.